The following is a 186-amino-acid chain: dCTP deaminase (186 aa).

107 to 112 (KSTYAR) contributes to the dCTP binding site. Glu133 (proton donor/acceptor) is an active-site residue. DCTP-binding residues include Gln152, Tyr166, and Gln176.

This sequence belongs to the dCTP deaminase family. As to quaternary structure, homotrimer.

The catalysed reaction is dCTP + H2O + H(+) = dUTP + NH4(+). It participates in pyrimidine metabolism; dUMP biosynthesis; dUMP from dCTP (dUTP route): step 1/2. Its function is as follows. Catalyzes the deamination of dCTP to dUTP. This is dCTP deaminase from Campylobacter curvus (strain 525.92).